Consider the following 390-residue polypeptide: Alanine racemase (390 aa).

The Proton acceptor; specific for D-alanine role is filled by lysine 37. At lysine 37 the chain carries N6-(pyridoxal phosphate)lysine. Arginine 135 is a substrate binding site. Tyrosine 274 serves as the catalytic Proton acceptor; specific for L-alanine. A substrate-binding site is contributed by methionine 322.

This sequence belongs to the alanine racemase family. It depends on pyridoxal 5'-phosphate as a cofactor.

It catalyses the reaction L-alanine = D-alanine. It functions in the pathway amino-acid biosynthesis; D-alanine biosynthesis; D-alanine from L-alanine: step 1/1. Its function is as follows. Catalyzes the interconversion of L-alanine and D-alanine. May also act on other amino acids. This Desulfosudis oleivorans (strain DSM 6200 / JCM 39069 / Hxd3) (Desulfococcus oleovorans) protein is Alanine racemase (alr).